The following is a 169-amino-acid chain: Cell division inhibitor SulA (169 aa).

The ftsZ binding stretch occupies residues 106-112 (ALRTGNY). The segment at 162–169 (KIHSNLYH) is lon protease binding.

It belongs to the SulA family. Interacts with FtsZ. Is rapidly cleaved and degraded by the Lon protease once DNA damage is repaired.

Its function is as follows. Component of the SOS system and an inhibitor of cell division. Accumulation of SulA causes rapid cessation of cell division and the appearance of long, non-septate filaments. In the presence of GTP, binds a polymerization-competent form of FtsZ in a 1:1 ratio, thus inhibiting FtsZ polymerization and therefore preventing it from participating in the assembly of the Z ring. This mechanism prevents the premature segregation of damaged DNA to daughter cells during cell division. The protein is Cell division inhibitor SulA of Salmonella dublin (strain CT_02021853).